The primary structure comprises 1571 residues: Phospholipid-transporting ATPase DNF1 (1571 aa).

The segment at 1 to 94 (MSGTFHGDGH…TPKLNNGSGT (94 aa)) is disordered. The Cytoplasmic portion of the chain corresponds to 1–214 (MSGTFHGDGH…TFLPKNILFQ (214 aa)). A compositionally biased stretch (basic and acidic residues) spans 29–40 (EDTHIAPTHFDD). Over residues 42–56 (ATSNKYSRPQVSFND) the composition is skewed to polar residues. A Phosphoserine modification is found at serine 53. Acidic residues predominate over residues 66–76 (AEEFTFNDDTE). Threonine 70 bears the Phosphothreonine mark. Residues 80 to 93 (HSFQPTPKLNNGSG) show a composition bias toward polar residues. At serine 81 the chain carries Phosphoserine. Threonine 85 is modified (phosphothreonine). The residue at position 92 (serine 92) is a Phosphoserine. A Phosphothreonine modification is found at threonine 94. At serine 104 the chain carries Phosphoserine. Residue threonine 109 is modified to Phosphothreonine. The helical transmembrane segment at 215–235 (FHNFANVYFLVLIILGAFQIF) threads the bilayer. An involved in phosphatidylcholine substrate selection region spans residues 234-241 (IFGVTNPG). Over 236 to 239 (GVTN) the chain is Extracellular. Residues 240-260 (PGLSAVPLVVIVIITAIKDAI) traverse the membrane as a helical segment. The Cytoplasmic portion of the chain corresponds to 261-553 (EDSRRTVLDL…RISRELNFSV (293 aa)). Phosphoserine is present on residues serine 351, serine 354, serine 358, and serine 365. Tyrosine 368 bears the Phosphotyrosine mark. The helical transmembrane segment at 554-574 (VINFVLLFILCFVSGIANGVY) threads the bilayer. Residues 575-594 (YDKKGRSRFSYEFGTIAGSA) are Extracellular-facing. Residues 586–590 (EFGTI) form an involved in phosphatidylcholine substrate selection region. The helical transmembrane segment at 595–615 (ATNGFVSFWVAVILYQSLVPI) threads the bilayer. Topologically, residues 616 to 1188 (SLYISVEIIK…WSYKRLAEMI (573 aa)) are cytoplasmic. Aspartate 667 (4-aspartylphosphate intermediate) is an active-site residue. ATP contacts are provided by aspartate 667, lysine 668, threonine 669, glutamate 801, phenylalanine 842, serine 844, lysine 847, and lysine 871. Position 667 (aspartate 667) interacts with Mg(2+). Threonine 669 contributes to the Mg(2+) binding site. Lysine 895 participates in a covalent cross-link: Glycyl lysine isopeptide (Lys-Gly) (interchain with G-Cter in ubiquitin). Arginine 909, threonine 910, threonine 989, glycine 990, aspartate 991, arginine 1104, and lysine 1110 together coordinate ATP. Aspartate 1130 is a Mg(2+) binding site. Positions 1133 and 1134 each coordinate ATP. Aspartate 1134 contributes to the Mg(2+) binding site. A helical transmembrane segment spans residues 1189–1209 (PEFFYKNMIFALALFWYGIYN). Topologically, residues 1210-1219 (DFDGSYLYEY) are extracellular. The helical transmembrane segment at 1220–1240 (TYMMFYNLAFTSLPVIFLGIL) threads the bilayer. Residues 1241-1270 (DQDVNDTISLVVPQLYRVGILRKEWNQRKF) lie on the Cytoplasmic side of the membrane. A helical membrane pass occupies residues 1271 to 1291 (LWYMLDGLYQSIICFFFPYLV). Over 1292–1307 (YHKNMIVTSNGLGLDH) the chain is Extracellular. The helical transmembrane segment at 1308–1328 (RYFVGVYVTTIAVISCNTYVL) threads the bilayer. At 1329–1334 (LHQYRW) the chain is on the cytoplasmic side. The helical transmembrane segment at 1335-1355 (DWFSGLFIALSCLVVFAWTGI) threads the bilayer. The Extracellular segment spans residues 1356–1375 (WSSAIASREFFKAAARIYGA). A helical transmembrane segment spans residues 1376–1396 (PSFWAVFFVAVLFCLLPRFTY). Position 1393 (arginine 1393) interacts with a 1,2-diacyl-sn-glycero-3-phospho-L-serine. At 1397–1571 (DSFQKFFYPT…ASLIGTQQNN (175 aa)) the chain is on the cytoplasmic side. A Phosphoserine modification is found at serine 1506. Threonine 1551 carries the post-translational modification Phosphothreonine. 2 positions are modified to phosphoserine: serine 1552 and serine 1563.

Belongs to the cation transport ATPase (P-type) (TC 3.A.3) family. Type IV subfamily. As to quaternary structure, component of a flippase complex consisting of DNF1 and LEM3. Interacts with LEM3; the interaction is direct and required for their mutual export from the endoplasmic reticulum. The cofactor is Mg(2+). In terms of processing, phosphorylated by FPK1 and KIN82.

Its subcellular location is the cell membrane. The protein resides in the endosome membrane. The protein localises to the golgi apparatus. It is found in the trans-Golgi network membrane. It localises to the cell septum. Its subcellular location is the bud. The enzyme catalyses ATP + H2O + phospholipidSide 1 = ADP + phosphate + phospholipidSide 2.. It catalyses the reaction a 1,2-diacyl-sn-glycero-3-phosphoethanolamine(out) + ATP + H2O = a 1,2-diacyl-sn-glycero-3-phosphoethanolamine(in) + ADP + phosphate + H(+). The catalysed reaction is a 1,2-diacyl-sn-glycero-3-phosphocholine(out) + ATP + H2O = a 1,2-diacyl-sn-glycero-3-phosphocholine(in) + ADP + phosphate + H(+). It carries out the reaction a beta-D-glucosyl-(1&lt;-&gt;1')-N-acylsphing-4-enine(out) + ATP + H2O = a beta-D-glucosyl-(1&lt;-&gt;1')-N-acylsphing-4-enine(in) + ADP + phosphate + H(+). The enzyme catalyses a 1,2-diacyl-sn-glycero-3-phospho-L-serine(out) + ATP + H2O = a 1,2-diacyl-sn-glycero-3-phospho-L-serine(in) + ADP + phosphate + H(+). In terms of biological role, catalytic component of a P4-ATPase flippase complex which catalyzes the hydrolysis of ATP coupled to the transport of glucosylceramide, phosphatidylcholine, phosphatidylethanolamine, and small amounts of phosphatidylserine from the lumenal to the cytosolic leaflet of the cell membrane and ensures the maintenance of asymmetric distribution of phospholipids. Does not appear to transport sphingomyelin, inositol phosphoceramide, or phosphatidic acid. Required for efficient endocytosis. In Saccharomyces cerevisiae (strain ATCC 204508 / S288c) (Baker's yeast), this protein is Phospholipid-transporting ATPase DNF1.